We begin with the raw amino-acid sequence, 205 residues long: Ribosomal RNA small subunit methyltransferase G (205 aa).

Residues Gly76, Leu81, 127–128 (IE), and Arg140 contribute to the S-adenosyl-L-methionine site.

Belongs to the methyltransferase superfamily. RNA methyltransferase RsmG family.

The protein localises to the cytoplasm. The catalysed reaction is guanosine(527) in 16S rRNA + S-adenosyl-L-methionine = N(7)-methylguanosine(527) in 16S rRNA + S-adenosyl-L-homocysteine. Functionally, specifically methylates the N7 position of guanine in position 527 of 16S rRNA. This Francisella tularensis subsp. tularensis (strain WY96-3418) protein is Ribosomal RNA small subunit methyltransferase G.